Here is a 284-residue protein sequence, read N- to C-terminus: Bifunctional protein FolD (284 aa).

Residues 166–168 (GAS) and Ile232 each bind NADP(+).

Belongs to the tetrahydrofolate dehydrogenase/cyclohydrolase family. In terms of assembly, homodimer.

The catalysed reaction is (6R)-5,10-methylene-5,6,7,8-tetrahydrofolate + NADP(+) = (6R)-5,10-methenyltetrahydrofolate + NADPH. It catalyses the reaction (6R)-5,10-methenyltetrahydrofolate + H2O = (6R)-10-formyltetrahydrofolate + H(+). It functions in the pathway one-carbon metabolism; tetrahydrofolate interconversion. In terms of biological role, catalyzes the oxidation of 5,10-methylenetetrahydrofolate to 5,10-methenyltetrahydrofolate and then the hydrolysis of 5,10-methenyltetrahydrofolate to 10-formyltetrahydrofolate. The protein is Bifunctional protein FolD of Shewanella halifaxensis (strain HAW-EB4).